The chain runs to 264 residues: Major prion protein (264 aa).

The first 24 residues, 1-24, serve as a signal peptide directing secretion; it reads MVKSHIGSWILVLFVAMWSDVGLC. An interaction with GRB2, ERI3 and SYN1 region spans residues 25–241; that stretch reads KKRPKPGGGW…ESQAYYQRGA (217 aa). The tract at residues 28 to 118 is disordered; that stretch reads PKPGGGWNTG…QWNKPSKPKT (91 aa). Residues 37-54 are compositionally biased toward low complexity; the sequence is GGSRYPGPGSPGGNRYPP. Repeat copies occupy residues 54–62, 63–70, 71–78, 79–86, 87–94, and 95–103. Residues 54–103 form a 6 X 8 AA tandem repeats of P-H-G-G-G-W-G-Q region; sequence PQGGGGWGQPHGGGWGQPHGGGWGQPHGGGWGQPHGGGWGQPHGGGGWGQ. Positions 55-107 are enriched in gly residues; sequence QGGGGWGQPHGGGWGQPHGGGWGQPHGGGWGQPHGGGWGQPHGGGGWGQGGTH. Positions 72, 73, 74, 80, 81, 82, 88, 89, 90, 96, and 98 each coordinate Cu(2+). Cys190 and Cys225 are joined by a disulfide. 2 N-linked (GlcNAc...) asparagine glycosylation sites follow: Asn192 and Asn208. Ala241 carries the GPI-anchor amidated alanine lipid modification. The propeptide at 242-264 is removed in mature form; the sequence is SVILFSSPPVILLISFLIFLIVG.

This sequence belongs to the prion family. Monomer and homodimer. Has a tendency to aggregate into amyloid fibrils containing a cross-beta spine, formed by a steric zipper of superposed beta-strands. Soluble oligomers may represent an intermediate stage on the path to fibril formation. Copper binding may promote oligomerization. Interacts with GRB2, APP, ERI3/PRNPIP and SYN1. Mislocalized cytosolically exposed PrP interacts with MGRN1; this interaction alters MGRN1 subcellular location and causes lysosomal enlargement. Interacts with KIAA1191.

It is found in the cell membrane. Its subcellular location is the golgi apparatus. Its function is as follows. Its primary physiological function is unclear. Has cytoprotective activity against internal or environmental stresses. May play a role in neuronal development and synaptic plasticity. May be required for neuronal myelin sheath maintenance. May play a role in iron uptake and iron homeostasis. Soluble oligomers are toxic to cultured neuroblastoma cells and induce apoptosis (in vitro). Association with GPC1 (via its heparan sulfate chains) targets PRNP to lipid rafts. Also provides Cu(2+) or Zn(2+) for the ascorbate-mediated GPC1 deaminase degradation of its heparan sulfate side chains. This chain is Major prion protein (PRNP), found in Ailuropoda melanoleuca (Giant panda).